The sequence spans 470 residues: 3-isopropylmalate dehydratase large subunit (470 aa).

[4Fe-4S] cluster is bound by residues Cys349, Cys410, and Cys413.

It belongs to the aconitase/IPM isomerase family. LeuC type 1 subfamily. Heterodimer of LeuC and LeuD. [4Fe-4S] cluster is required as a cofactor.

It catalyses the reaction (2R,3S)-3-isopropylmalate = (2S)-2-isopropylmalate. Its pathway is amino-acid biosynthesis; L-leucine biosynthesis; L-leucine from 3-methyl-2-oxobutanoate: step 2/4. Functionally, catalyzes the isomerization between 2-isopropylmalate and 3-isopropylmalate, via the formation of 2-isopropylmaleate. The sequence is that of 3-isopropylmalate dehydratase large subunit from Nitrosomonas europaea (strain ATCC 19718 / CIP 103999 / KCTC 2705 / NBRC 14298).